The chain runs to 175 residues: Interleukin-10 (175 aa).

Residues 1–18 (MPSSALLYCLIFLAGVAA) form the signal peptide. Intrachain disulfides connect Cys-26–Cys-122 and Cys-76–Cys-128. Residue Asn-130 is glycosylated (N-linked (GlcNAc...) asparagine).

Belongs to the IL-10 family. As to quaternary structure, homodimer. Interacts with IL10RA and IL10RB.

It localises to the secreted. Its function is as follows. Major immune regulatory cytokine that acts on many cells of the immune system where it has profound anti-inflammatory functions, limiting excessive tissue disruption caused by inflammation. Mechanistically, IL10 binds to its heterotetrameric receptor comprising IL10RA and IL10RB leading to JAK1 and STAT2-mediated phosphorylation of STAT3. In turn, STAT3 translocates to the nucleus where it drives expression of anti-inflammatory mediators. Targets antigen-presenting cells (APCs) such as macrophages and monocytes and inhibits their release of pro-inflammatory cytokines including granulocyte-macrophage colony-stimulating factor /GM-CSF, granulocyte colony-stimulating factor/G-CSF, IL-1 alpha, IL-1 beta, IL-6, IL-8 and TNF-alpha. Also interferes with antigen presentation by reducing the expression of MHC-class II and co-stimulatory molecules, thereby inhibiting their ability to induce T cell activation. In addition, controls the inflammatory response of macrophages by reprogramming essential metabolic pathways including mTOR signaling. The chain is Interleukin-10 (IL10) from Sus scrofa (Pig).